We begin with the raw amino-acid sequence, 142 residues long: Large ribosomal subunit protein uL11 (142 aa).

This sequence belongs to the universal ribosomal protein uL11 family. In terms of assembly, part of the ribosomal stalk of the 50S ribosomal subunit. Interacts with L10 and the large rRNA to form the base of the stalk. L10 forms an elongated spine to which L12 dimers bind in a sequential fashion forming a multimeric L10(L12)X complex. In terms of processing, one or more lysine residues are methylated.

Functionally, forms part of the ribosomal stalk which helps the ribosome interact with GTP-bound translation factors. In Rhodospirillum rubrum (strain ATCC 11170 / ATH 1.1.1 / DSM 467 / LMG 4362 / NCIMB 8255 / S1), this protein is Large ribosomal subunit protein uL11.